Here is a 303-residue protein sequence, read N- to C-terminus: N-acetyl-D-glucosamine kinase (303 aa).

ATP contacts are provided by residues 4-11 (GFDIGGTK) and 133-140 (GVGGGLVL). Zn(2+)-binding residues include histidine 157, cysteine 177, cysteine 179, and cysteine 184.

It belongs to the ROK (NagC/XylR) family. NagK subfamily.

The enzyme catalyses N-acetyl-D-glucosamine + ATP = N-acetyl-D-glucosamine 6-phosphate + ADP + H(+). The protein operates within cell wall biogenesis; peptidoglycan recycling. Catalyzes the phosphorylation of N-acetyl-D-glucosamine (GlcNAc) derived from cell-wall degradation, yielding GlcNAc-6-P. This Salmonella agona (strain SL483) protein is N-acetyl-D-glucosamine kinase.